The following is a 162-amino-acid chain: Ribosome maturation factor RimM (162 aa).

Residues 91–162 form the PRC barrel domain; it reads DGSFYIDDLI…LIDVVIIEGM (72 aa).

The protein belongs to the RimM family. In terms of assembly, binds ribosomal protein uS19.

The protein localises to the cytoplasm. An accessory protein needed during the final step in the assembly of 30S ribosomal subunit, possibly for assembly of the head region. Essential for efficient processing of 16S rRNA. May be needed both before and after RbfA during the maturation of 16S rRNA. It has affinity for free ribosomal 30S subunits but not for 70S ribosomes. This is Ribosome maturation factor RimM from Finegoldia magna (strain ATCC 29328 / DSM 20472 / WAL 2508) (Peptostreptococcus magnus).